Reading from the N-terminus, the 250-residue chain is tRNA pseudouridine synthase A (250 aa).

Catalysis depends on Asp52, which acts as the Nucleophile. A substrate-binding site is contributed by Tyr110.

Belongs to the tRNA pseudouridine synthase TruA family. As to quaternary structure, homodimer.

The catalysed reaction is uridine(38/39/40) in tRNA = pseudouridine(38/39/40) in tRNA. Functionally, formation of pseudouridine at positions 38, 39 and 40 in the anticodon stem and loop of transfer RNAs. The chain is tRNA pseudouridine synthase A from Citrifermentans bemidjiense (strain ATCC BAA-1014 / DSM 16622 / JCM 12645 / Bem) (Geobacter bemidjiensis).